A 364-amino-acid chain; its full sequence is D-alanine--D-alanine ligase (364 aa).

Residues 140–346 (KKLALLEGIP…YSQLIDKLIS (207 aa)) enclose the ATP-grasp domain. Residue 173–228 (ESEFSYPVFVKPANSGSSVGISKAKDREDLVLAIHEAFLYDTKILIEQAINAREIE) participates in ATP binding. 3 residues coordinate Mg(2+): Asp299, Glu313, and Asn315.

This sequence belongs to the D-alanine--D-alanine ligase family. The cofactor is Mg(2+). Mn(2+) serves as cofactor.

The protein localises to the cytoplasm. It catalyses the reaction 2 D-alanine + ATP = D-alanyl-D-alanine + ADP + phosphate + H(+). It participates in cell wall biogenesis; peptidoglycan biosynthesis. Functionally, cell wall formation. This Caldicellulosiruptor bescii (strain ATCC BAA-1888 / DSM 6725 / KCTC 15123 / Z-1320) (Anaerocellum thermophilum) protein is D-alanine--D-alanine ligase.